The following is a 393-amino-acid chain: Cysteine protease ATG4B (393 aa).

M1 is subject to N-acetylmethionine. S34 carries the phosphoserine modification. C74 serves as the catalytic Nucleophile. C189 bears the S-nitrosocysteine mark. Residues D278 and H280 contribute to the active site. S-nitrosocysteine occurs at positions 292 and 301. Cysteines 292 and 361 form a disulfide. Phosphoserine occurs at positions 316 and 383. The LIR motif lies at 388-391; it reads FEIL. S392 carries the post-translational modification Phosphoserine.

Belongs to the peptidase C54 family. In terms of assembly, interacts with PFKP; promoting phosphorylation of ATG4B at Ser-34. Interacts with GBP7. Phosphorylation at Ser-383 and Ser-392 promotes autophagy by increasing protein delipidation activity without affecting proteolytic activation of ATG8 proteins. Phosphorylation at Ser-316 by ULK1 inhibits autophagy by decreasing both proteolytic activation and delipidation activities. Phosphorylation at Ser-316 is dephosphorylated by protein phosphatase 2A (PP2A). Phosphorylation at Ser-34 by AKT2 promotes its hydrolase activity, leading to increased proteolytic activation and delipidation of ATG8 family proteins. Phosphorylation at Ser-34 by AKT1 promotes mitochondrial localization and inhibition of the F1F0-ATP synthase activity, leading to elevation of mitochondrial reactive oxygen species (ROS). Post-translationally, ubiquitinated by RNF5, leading to its degradation by the proteasome. In terms of processing, S-nitrosylation in response to high glucose decreases both proteolytic activation and delipidation activities. O-glycosylated by OGT, leading to increase protease activity, thereby promoting the proteolytic activation of ATG8 family proteins. Post-translationally, forms reversible intrachain disulfide bonds in response to oxidative stress. Forms interchain disulfide bonds, leading to formation of homooligomers in response to oxidation.

Its subcellular location is the cytoplasm. The protein resides in the cytosol. The protein localises to the cytoplasmic vesicle. It is found in the autophagosome. It localises to the endoplasmic reticulum. Its subcellular location is the mitochondrion. It catalyses the reaction [protein]-C-terminal L-amino acid-glycyl-phosphatidylethanolamide + H2O = [protein]-C-terminal L-amino acid-glycine + a 1,2-diacyl-sn-glycero-3-phosphoethanolamine. It carries out the reaction [protein]-C-terminal L-amino acid-glycyl-phosphatidylserine + H2O = [protein]-C-terminal L-amino acid-glycine + a 1,2-diacyl-sn-glycero-3-phospho-L-serine. Its activity is regulated as follows. Inhibited by N-ethylmaleimide. Redox-regulated during autophagy since reducing conditions activate ATG4A whereas an oxidizing environment such as the presence of H(2)O(2) inhibits its activity. The cysteine protease activity compounds is inhibited by styrylquinoline compounds 4-28 and LV-320. In terms of biological role, cysteine protease that plays a key role in autophagy by mediating both proteolytic activation and delipidation of ATG8 family proteins. Required for canonical autophagy (macroautophagy), non-canonical autophagy as well as for mitophagy. The protease activity is required for proteolytic activation of ATG8 family proteins: cleaves the C-terminal amino acid of ATG8 proteins MAP1LC3A, MAP1LC3B, MAP1LC3C, GABARAPL1, GABARAPL2 and GABARAP, to reveal a C-terminal glycine. Exposure of the glycine at the C-terminus is essential for ATG8 proteins conjugation to phosphatidylethanolamine (PE) and insertion to membranes, which is necessary for autophagy. Protease activity is also required to counteract formation of high-molecular weight conjugates of ATG8 proteins (ATG8ylation): acts as a deubiquitinating-like enzyme that removes ATG8 conjugated to other proteins, such as ATG3. In addition to the protease activity, also mediates delipidation of ATG8 family proteins. Catalyzes delipidation of PE-conjugated forms of ATG8 proteins during macroautophagy. Also involved in non-canonical autophagy, a parallel pathway involving conjugation of ATG8 proteins to single membranes at endolysosomal compartments, by catalyzing delipidation of ATG8 proteins conjugated to phosphatidylserine (PS). Compared to other members of the family (ATG4A, ATG4C or ATG4C), constitutes the major protein for proteolytic activation of ATG8 proteins, while it displays weaker delipidation activity than other ATG4 paralogs. Involved in phagophore growth during mitophagy independently of its protease activity and of ATG8 proteins: acts by regulating ATG9A trafficking to mitochondria and promoting phagophore-endoplasmic reticulum contacts during the lipid transfer phase of mitophagy. The chain is Cysteine protease ATG4B from Rattus norvegicus (Rat).